The following is a 709-amino-acid chain: ATP-binding cassette sub-family F member 3 (709 aa).

An N-acetylalanine modification is found at Ala-2. Residue Ser-83 is modified to Phosphoserine. Basic and acidic residues predominate over residues Arg-129 to Leu-143. Positions Arg-129–Gly-171 are disordered. Phosphoserine is present on residues Ser-155, Ser-157, and Ser-161. Residues Ser-161 to Gly-171 show a composition bias toward basic and acidic residues. 2 consecutive ABC transporter domains span residues Val-178–Gln-424 and Leu-492–Gly-707. Gly-210–Thr-217 contacts ATP. Phosphoserine is present on Ser-283. Gly-525–Ser-532 provides a ligand contact to ATP.

It belongs to the ABC transporter superfamily. ABCF family. EF3 subfamily.

In terms of biological role, displays an antiviral effect against flaviviruses such as west Nile virus (WNV) in the presence of OAS1B. The chain is ATP-binding cassette sub-family F member 3 (ABCF3) from Homo sapiens (Human).